The following is a 74-amino-acid chain: ATP synthase subunit c (74 aa).

The next 2 helical transmembrane spans lie at 5–25 (LAHI…IGVG) and 49–69 (LFIG…VALL).

This sequence belongs to the ATPase C chain family. F-type ATPases have 2 components, F(1) - the catalytic core - and F(0) - the membrane proton channel. F(1) has five subunits: alpha(3), beta(3), gamma(1), delta(1), epsilon(1). F(0) has three main subunits: a(1), b(2) and c(10-14). The alpha and beta chains form an alternating ring which encloses part of the gamma chain. F(1) is attached to F(0) by a central stalk formed by the gamma and epsilon chains, while a peripheral stalk is formed by the delta and b chains.

Its subcellular location is the cell inner membrane. In terms of biological role, f(1)F(0) ATP synthase produces ATP from ADP in the presence of a proton or sodium gradient. F-type ATPases consist of two structural domains, F(1) containing the extramembraneous catalytic core and F(0) containing the membrane proton channel, linked together by a central stalk and a peripheral stalk. During catalysis, ATP synthesis in the catalytic domain of F(1) is coupled via a rotary mechanism of the central stalk subunits to proton translocation. Functionally, key component of the F(0) channel; it plays a direct role in translocation across the membrane. A homomeric c-ring of between 10-14 subunits forms the central stalk rotor element with the F(1) delta and epsilon subunits. This is ATP synthase subunit c from Ruegeria pomeroyi (strain ATCC 700808 / DSM 15171 / DSS-3) (Silicibacter pomeroyi).